Reading from the N-terminus, the 349-residue chain is Terpene cyclase janA (349 aa).

Residue Asn80 is glycosylated (N-linked (GlcNAc...) asparagine). 6 consecutive transmembrane segments (helical) span residues 81–101 (LSLYGVAFASALVPMWLVIVL), 116–136 (LAFLAGPLVQCLGPGLVIPAI), 155–175 (IGFYPSSMIIGYILPLILAAL), 189–209 (LIAVWQGWPVYTSLIMLIIHY), 223–243 (IACAFAFACSTAGHLAFLWFA), and 308–328 (VILIFGMAGVVFLGPCSVALL).

This sequence belongs to the membrane-bound ascI terpene cyclase family.

It is found in the membrane. The protein operates within secondary metabolite biosynthesis. In terms of biological role, part of the gene cluster that mediates the biosynthesis of the indole diterpenes janthitremanes such as shearinine K or shearinine A. The geranylgeranyl diphosphate (GGPP) synthase janG catalyzes the first step in janthitremane biosynthesis via conversion of farnesyl pyrophosphate and isopentyl pyrophosphate into geranylgeranyl pyrophosphate (GGPP). Condensation of indole-3-glycerol phosphate with GGPP by the prenyl transferase janC then forms 3-geranylgeranylindole (3-GGI). Epoxidation by the FAD-dependent monooxygenase janM leads to a epoxidized-GGI that is substrate of the terpene cyclase janB for cyclization to yield paspaline. Paspaline is subsequently converted to 13-desoxypaspaline by the cytochrome P450 monooxygenase janP, via beta-PC-M6 in a series of alpha-face oxidations. The cytochrome P450 monooxygenase janQ is proposed to carry out sequential beta-face oxidation steps at C-7 and C-13 of 13-desoxypaspaline to form paspalicine and paspalinine respectively. The indole diterpene prenyltransferase janD may then convert paspalinine into shearinine K which is substrate of janO and/or additional enzymes for oxidation and cyclization to generate shearinine A. The sequence is that of Terpene cyclase janA from Penicillium janthinellum (Penicillium vitale).